Consider the following 2094-residue polypeptide: Non-reducing polyketide synthase ustP (2094 aa).

The N-terminal acylcarrier protein transacylase (SAT) domain stretch occupies residues 9-243; that stretch reads VFGDLSVPYH…GKIQVGGLFH (235 aa). Residues 357–377 form a disordered region; it reads NTAGVDSSSRGSGHADAEKQP. In terms of domain architecture, Ketosynthase family 3 (KS3) spans 379 to 813; the sequence is RSKIAIIGFS…GGNSSVLVED (435 aa). Active-site for beta-ketoacyl synthase activity residues include Cys-551, His-686, and His-727. Residues 914 to 1227 form a malonyl-CoA:ACP transacylase (MAT) domain region; the sequence is FSFTGQGSQY…EDDCKIFTPA (314 aa). Ser-1004 acts as the For acyl/malonyl transferase activity in catalysis. The tract at residues 1305–1629 is product template (PT) domain; it reads TTSVQYITAE…QRKVLDLVLP (325 aa). Residues 1308–1445 form an N-terminal hotdog fold region; sequence VQYITAESYG…CSGFFTDKSR (138 aa). Residues 1308–1625 form the PKS/mFAS DH domain; the sequence is VQYITAESYG…FAAVQRKVLD (318 aa). His-1341 serves as the catalytic Proton acceptor; for dehydratase activity. Residues 1473–1625 form a C-terminal hotdog fold region; it reads GSVHMIKTGM…FAAVQRKVLD (153 aa). Asp-1536 acts as the Proton donor; for dehydratase activity in catalysis. The span at 1644–1671 shows a compositional bias: low complexity; it reads AAAAPSQRQQQQQQQQQQQPAQPVAASQ. The tract at residues 1644–1689 is disordered; that stretch reads AAAAPSQRQQQQQQQQQQQPAQPVAASQESGMDDMPPTLVPSEKKD. Positions 1689–1763 constitute a Carrier domain; sequence DVPSEKLKVI…ELVRHILGSS (75 aa). Ser-1723 is subject to O-(pantetheine 4'-phosphoryl)serine. Residues 1762 to 1778 are compositionally biased toward polar residues; sequence SSTPSSDSGPATPSITP. Positions 1762 to 1782 are disordered; that stretch reads SSTPSSDSGPATPSITPLQEP. The claisen cyclase domain stretch occupies residues 1844–2069; the sequence is KVWLFPDGSG…GVVEGAHHFS (226 aa). The active-site For Claisen cyclase activity is the Ser-1916.

It catalyses the reaction 6 malonyl-CoA + acetyl-CoA + 6 H(+) = naphtopyrone YWA1 + 6 CO2 + 7 CoA + H2O. It participates in secondary metabolite biosynthesis. Its function is as follows. Non-reducing polyketide synthase; part of the gene cluster that mediates the biosynthesis of ustilaginoidins, dimeric gamma-naphthopyrones isolated from different fungal species. The first step in the biosynthesis of ustilaginoidins is the production of gamma-naphthopyrone precursor YWA1 by the non-reducing polyketide synthase ustP, via condensation of one acetyl-CoA starter unit with 6 malonyl-CoA units. YWA1 is then probably substrate of the ustZ to yield norrubrofusarin via a dehydration reaction. A key enzyme in the biosynthetic pathway is the laccase ustL, which catalyzes the oxidative dimerization of norrubrofusarin to ustilaginoidin A. It can produce the M- and P-atropisomers in varying amounts, depending on the reaction conditions. For the biosynthesis of 3-methylustilaginoid in derivatives such as chaetochromin A, a methylated derivative of YWA1 is required. The C-methylation is considered to be catalyzed by ustM, the phosphopantetheine attachment site of which indicates that it acts on the growing polyketide chain before release of the product. For the biosynthesis of chaetochromin A, it is assumed that saturation of the D2 double bond takes place before dimerization, and is probably catalyzed by an external reductase because no candidate gene was identified within the cluster. This is Non-reducing polyketide synthase ustP from Ustilaginoidea virens (Rice false smut fungus).